The chain runs to 42 residues: Histone H1B (42 aa).

Residues 1-42 (TYYELIKAAILALKERNGSSAQAIKKYILENNKIEFQQTFLR) form the H15 domain.

This sequence belongs to the histone H1/H5 family.

Its subcellular location is the nucleus. The protein localises to the chromosome. Histones H1 are necessary for the condensation of nucleosome chains into higher-order structures. This chain is Histone H1B, found in Olisthodiscus luteus (Marine phytoflagellate).